Reading from the N-terminus, the 433-residue chain is Ribosomal RNA small subunit methyltransferase B (433 aa).

Residues 254–260 (CAAPGGK), aspartate 277, aspartate 303, and aspartate 322 contribute to the S-adenosyl-L-methionine site. Cysteine 375 functions as the Nucleophile in the catalytic mechanism.

The protein belongs to the class I-like SAM-binding methyltransferase superfamily. RsmB/NOP family.

It is found in the cytoplasm. The enzyme catalyses cytidine(967) in 16S rRNA + S-adenosyl-L-methionine = 5-methylcytidine(967) in 16S rRNA + S-adenosyl-L-homocysteine + H(+). In terms of biological role, specifically methylates the cytosine at position 967 (m5C967) of 16S rRNA. The polypeptide is Ribosomal RNA small subunit methyltransferase B (Sodalis glossinidius (strain morsitans)).